The sequence spans 381 residues: MAINIRKTHPLLKIINHTLIDLPAPSNISLWWNFGSLLGLCLIIQILTGLFLAMHYTADISMAFSSVVHICRDVNYGWLIRNIHANGASLFFICIYLHIARGLYYGSYLYKETWNIGVILLFLLMATAFVGYVLPWGQMSFWGATVITNLLSAFPYVGNTLVQWIWGGFSVDNATLTRFFAFHFLLPFLILALTIIHLLFLHETGSNNPLGINSDMDKISFHPYMSYKDILGFFAMIFFLAVLTLFIPNLLGDAENFIPANPLVTPPHIKPEWYLLFAYAIFRSIPNKLGGVLALLFSILILMLVPLLQTSKQRSTIFRPMTQILFWFLVANSIILTWIGGQPVEQPFIMVGQIASISYFSMFLIIIPFASWCENKILSLN.

The next 4 helical transmembrane spans lie at 34–54 (FGSLLGLCLIIQILTGLFLAM), 78–99 (WLIRNIHANGASLFFICIYLHI), 114–134 (WNIGVILLFLLMATAFVGYVL), and 179–199 (FFAFHFLLPFLILALTIIHLL). 2 residues coordinate heme b: H84 and H98. Heme b contacts are provided by H183 and H197. H202 lines the a ubiquinone pocket. 4 helical membrane-spanning segments follow: residues 227–247 (YKDILGFFAMIFFLAVLTLFI), 289–309 (LGGVLALLFSILILMLVPLLQ), 321–341 (MTQILFWFLVANSIILTWIGG), and 348–368 (FIMVGQIASISYFSMFLIIIP).

Belongs to the cytochrome b family. In terms of assembly, the cytochrome bc1 complex contains 3 respiratory subunits (MT-CYB, CYC1 and UQCRFS1), 2 core proteins (UQCRC1 and UQCRC2) and probably 6 low-molecular weight proteins. Heme b serves as cofactor.

It localises to the mitochondrion inner membrane. Functionally, component of the ubiquinol-cytochrome c reductase complex (complex III or cytochrome b-c1 complex) that is part of the mitochondrial respiratory chain. The b-c1 complex mediates electron transfer from ubiquinol to cytochrome c. Contributes to the generation of a proton gradient across the mitochondrial membrane that is then used for ATP synthesis. The polypeptide is Cytochrome b (mt-cyb) (Galeocerdo cuvier (Tiger shark)).